A 73-amino-acid chain; its full sequence is U-scoloptoxin(22)-Cw1a (73 aa).

Residues 1-24 form the signal peptide; that stretch reads MRRFVFLAFVLVLFVIANLDSSSA.

Belongs to the scoloptoxin-22 family. In terms of processing, contains 1 disulfide bond. In terms of tissue distribution, expressed by the venom gland.

It localises to the secreted. This Cormocephalus westwoodi (Westwood's green centipede) protein is U-scoloptoxin(22)-Cw1a.